The sequence spans 274 residues: MPFLHLFTPYTNADNTKLILRVNESRLRLFTRQLLAEFFGTLFVVYIVSGSTLAANFAVSDPIVRVCLICLVQGFAFAAIIWSISGISGCQLNPAVTVGCVTTGRMGILNGIAFIIFQCVGALVGAGMMKASLPTFYERDLSATTLATGVNVARGFFLEMVTTSFLVFVVLGVAVYNEWDPKISRVAPLAIGCAVIAGVGFLNLFTGGSLNPARSFGPAVFSDTWHRHYIYWFGPICGGIIAGLFWRIFLSEKVLLIDRPYTDFHRSTYGTATK.

The Cytoplasmic segment spans residues Met1 to Gln33. A helical transmembrane segment spans residues Leu34–Ala54. Residues Ala55–Val66 lie on the Extracellular side of the membrane. Residues Cys67–Ile87 form a helical membrane-spanning segment. The Cytoplasmic portion of the chain corresponds to Ser88 to Arg105. The short motif at Asn93–Ala95 is the NPA 1 element. A helical transmembrane segment spans residues Met106–Ala126. The Extracellular segment spans residues Gly127–Arg154. A helical transmembrane segment spans residues Gly155 to Val175. Residues Tyr176–Arg185 lie on the Cytoplasmic side of the membrane. A helical membrane pass occupies residues Val186–Thr206. The Extracellular segment spans residues Gly207 to Tyr229. Positions Asn211–Ala213 match the NPA 2 motif. The helical transmembrane segment at Ile230–Leu250 threads the bilayer. At Ser251 to Lys274 the chain is on the cytoplasmic side.

It belongs to the MIP/aquaporin (TC 1.A.8) family.

It localises to the cell membrane. In terms of biological role, may form a water-specific channel. The protein is Aquaporin C (wacA) of Dictyostelium discoideum (Social amoeba).